The following is a 78-amino-acid chain: Large ribosomal subunit protein bL31 (78 aa).

4 residues coordinate Zn(2+): cysteine 16, cysteine 18, cysteine 38, and cysteine 41.

It belongs to the bacterial ribosomal protein bL31 family. Type A subfamily. As to quaternary structure, part of the 50S ribosomal subunit. Zn(2+) serves as cofactor.

Binds the 23S rRNA. In Frankia alni (strain DSM 45986 / CECT 9034 / ACN14a), this protein is Large ribosomal subunit protein bL31.